The sequence spans 628 residues: DNA-directed RNA polymerase subunit beta' (628 aa).

The Zn(2+) site is built by cysteine 70, cysteine 72, cysteine 85, and cysteine 88. Residues aspartate 472, aspartate 474, and aspartate 476 each coordinate Mg(2+).

The protein belongs to the RNA polymerase beta' chain family. RpoC1 subfamily. As to quaternary structure, in plastids the minimal PEP RNA polymerase catalytic core is composed of four subunits: alpha, beta, beta', and beta''. When a (nuclear-encoded) sigma factor is associated with the core the holoenzyme is formed, which can initiate transcription. The cofactor is Mg(2+). Requires Zn(2+) as cofactor.

Its subcellular location is the plastid. It localises to the chloroplast. It carries out the reaction RNA(n) + a ribonucleoside 5'-triphosphate = RNA(n+1) + diphosphate. Its function is as follows. DNA-dependent RNA polymerase catalyzes the transcription of DNA into RNA using the four ribonucleoside triphosphates as substrates. The chain is DNA-directed RNA polymerase subunit beta' from Gracilaria tenuistipitata var. liui (Red alga).